We begin with the raw amino-acid sequence, 594 residues long: UvrABC system protein C (594 aa).

The 78-residue stretch at 14-91 folds into the GIY-YIG domain; sequence DSPGCYLHKD…IQENMPKYNI (78 aa). The region spanning 196-231 is the UVR domain; sequence DKIIDDLRSKMLEASHNQEFERAAEYRDLISGIATM.

The protein belongs to the UvrC family. As to quaternary structure, interacts with UvrB in an incision complex.

It is found in the cytoplasm. The UvrABC repair system catalyzes the recognition and processing of DNA lesions. UvrC both incises the 5' and 3' sides of the lesion. The N-terminal half is responsible for the 3' incision and the C-terminal half is responsible for the 5' incision. The polypeptide is UvrABC system protein C (Streptococcus equi subsp. equi (strain 4047)).